The chain runs to 188 residues: Elongation factor P (188 aa).

Positions 139–163 (PVTKGQTASSSYKPATLSNGVRTQV) are disordered. Residues 142–160 (KGQTASSSYKPATLSNGVR) are compositionally biased toward polar residues.

This sequence belongs to the elongation factor P family.

It is found in the cytoplasm. It participates in protein biosynthesis; polypeptide chain elongation. In terms of biological role, involved in peptide bond synthesis. Stimulates efficient translation and peptide-bond synthesis on native or reconstituted 70S ribosomes in vitro. Probably functions indirectly by altering the affinity of the ribosome for aminoacyl-tRNA, thus increasing their reactivity as acceptors for peptidyl transferase. This is Elongation factor P from Methylobacterium nodulans (strain LMG 21967 / CNCM I-2342 / ORS 2060).